Reading from the N-terminus, the 292-residue chain is MDLPRLYVPATLANLGSGFDALGVALDLYLEVEAHPAPEDAFLYEGEGHVEGTDNLIHEGYRAGMRALGLEPFPLRVRAFNPIPLARGMGSSSAALVAGVALADRLSGGRLGREGVFRVAAGLEGHPDNVAPAVFGGFVAALSDPPLAIPLPRPEGVRFVLAVPPYEVPTPLAREALPREVPLEDAIYNLARSALWPAALSSGKLEALREACRDRLHQPHRAPLMPGVLEAIEGALEAGALAAFVGGAGPTLAALARAGEEAPVIRALSAYRGPEGRTLVLGIGEGYFWKET.

84 to 94 (PLARGMGSSSA) serves as a coordination point for ATP.

It belongs to the GHMP kinase family. Homoserine kinase subfamily.

Its subcellular location is the cytoplasm. It catalyses the reaction L-homoserine + ATP = O-phospho-L-homoserine + ADP + H(+). Its pathway is amino-acid biosynthesis; L-threonine biosynthesis; L-threonine from L-aspartate: step 4/5. Its function is as follows. Catalyzes the ATP-dependent phosphorylation of L-homoserine to L-homoserine phosphate. The chain is Homoserine kinase from Thermus thermophilus (strain ATCC BAA-163 / DSM 7039 / HB27).